The primary structure comprises 80 residues: U19-lycotoxin-Ls1b (80 aa).

Residues 1-22 (MSPKVQALIFIVGLITLLAAHA) form the signal peptide. Positions 23-34 (QEELSDNIESER) are excised as a propeptide. Cystine bridges form between Cys36/Cys50, Cys43/Cys55, Cys49/Cys66, and Cys57/Cys64.

Belongs to the neurotoxin 02 (plectoxin) family. 05 (U19-lycotoxin) subfamily. As to expression, expressed by the venom gland.

Its subcellular location is the secreted. The polypeptide is U19-lycotoxin-Ls1b (Lycosa singoriensis (Wolf spider)).